A 592-amino-acid polypeptide reads, in one-letter code: 2-succinyl-5-enolpyruvyl-6-hydroxy-3-cyclohexene-1-carboxylate synthase (592 aa).

The protein belongs to the TPP enzyme family. MenD subfamily. Homodimer. It depends on Mg(2+) as a cofactor. Requires Mn(2+) as cofactor. Thiamine diphosphate serves as cofactor.

It carries out the reaction isochorismate + 2-oxoglutarate + H(+) = 5-enolpyruvoyl-6-hydroxy-2-succinyl-cyclohex-3-ene-1-carboxylate + CO2. Its pathway is quinol/quinone metabolism; 1,4-dihydroxy-2-naphthoate biosynthesis; 1,4-dihydroxy-2-naphthoate from chorismate: step 2/7. It participates in quinol/quinone metabolism; menaquinone biosynthesis. Its function is as follows. Catalyzes the thiamine diphosphate-dependent decarboxylation of 2-oxoglutarate and the subsequent addition of the resulting succinic semialdehyde-thiamine pyrophosphate anion to isochorismate to yield 2-succinyl-5-enolpyruvyl-6-hydroxy-3-cyclohexene-1-carboxylate (SEPHCHC). This chain is 2-succinyl-5-enolpyruvyl-6-hydroxy-3-cyclohexene-1-carboxylate synthase, found in Haloarcula marismortui (strain ATCC 43049 / DSM 3752 / JCM 8966 / VKM B-1809) (Halobacterium marismortui).